We begin with the raw amino-acid sequence, 172 residues long: MRLPNILLTGTPGVGKTTLGKELASRSGLKYVNVGDLAREGELYDGFDEEYNCPILDEDRVIDELDTQMRDGGVIVDYHGCDFFPERWFHIVFVLRTETSVLYKRLETRGYSEKKLNDNIQCEIFQVLYEEAMESYKEEIVHQLPSNKPEELEENISQILKWIEQWIKDHNS.

Positions 13, 15, 16, 17, and 18 each coordinate ATP. Residues 33–56 (NVGDLAREGELYDGFDEEYNCPIL) are NMPbind. Positions 108–118 (TRGYSEKKLND) are LID. ATP contacts are provided by R109 and K148.

This sequence belongs to the adenylate kinase family. AK6 subfamily. In terms of assembly, monomer and homodimer. Interacts with small ribosomal subunit protein uS11. Not a structural component of 43S pre-ribosomes, but transiently interacts with them by binding to uS11. Interacts with COIL (via C-terminus).

The protein resides in the cytoplasm. The protein localises to the nucleus. It is found in the nucleoplasm. It localises to the cajal body. It catalyses the reaction AMP + ATP = 2 ADP. The enzyme catalyses ATP + H2O = ADP + phosphate + H(+). Functionally, broad-specificity nucleoside monophosphate (NMP) kinase that catalyzes the reversible transfer of the terminal phosphate group between nucleoside triphosphates and monophosphates. Also has ATPase activity. Involved in the late cytoplasmic maturation steps of the 40S ribosomal particles, specifically 18S rRNA maturation. While NMP activity is not required for ribosome maturation, ATPase activity is. Associates transiently with small ribosomal subunit protein uS11. ATP hydrolysis breaks the interaction with uS11. May temporarily remove uS11 from the ribosome to enable a conformational change of the ribosomal RNA that is needed for the final maturation step of the small ribosomal subunit. Its NMP activity may have a role in nuclear energy homeostasis. May be involved in regulation of Cajal body (CB) formation. This chain is Adenylate kinase isoenzyme 6, found in Oryctolagus cuniculus (Rabbit).